Here is a 496-residue protein sequence, read N- to C-terminus: Lysine--tRNA ligase (496 aa).

Residues Glu409 and Glu416 each contribute to the Mg(2+) site.

This sequence belongs to the class-II aminoacyl-tRNA synthetase family. In terms of assembly, homodimer. Mg(2+) serves as cofactor.

It is found in the cytoplasm. The catalysed reaction is tRNA(Lys) + L-lysine + ATP = L-lysyl-tRNA(Lys) + AMP + diphosphate. This Streptococcus suis (strain 05ZYH33) protein is Lysine--tRNA ligase.